Reading from the N-terminus, the 234-residue chain is Octanoyltransferase (234 aa).

Residues 43 to 231 (IPTRNYFLFV…HFQELFQAEL (189 aa)) enclose the BPL/LPL catalytic domain. Residues 88–95 (RGGDITYH), 160–162 (AMG), and 173–175 (GFA) each bind substrate. The active-site Acyl-thioester intermediate is the Cys-191.

This sequence belongs to the LipB family.

The protein resides in the cytoplasm. It catalyses the reaction octanoyl-[ACP] + L-lysyl-[protein] = N(6)-octanoyl-L-lysyl-[protein] + holo-[ACP] + H(+). It functions in the pathway protein modification; protein lipoylation via endogenous pathway; protein N(6)-(lipoyl)lysine from octanoyl-[acyl-carrier-protein]: step 1/2. Functionally, catalyzes the transfer of endogenously produced octanoic acid from octanoyl-acyl-carrier-protein onto the lipoyl domains of lipoate-dependent enzymes. Lipoyl-ACP can also act as a substrate although octanoyl-ACP is likely to be the physiological substrate. The chain is Octanoyltransferase from Christiangramia forsetii (strain DSM 17595 / CGMCC 1.15422 / KT0803) (Gramella forsetii).